Here is an 869-residue protein sequence, read N- to C-terminus: DNA mismatch repair protein MutS (869 aa).

618-625 (GPNMGGKS) serves as a coordination point for ATP.

This sequence belongs to the DNA mismatch repair MutS family.

Its function is as follows. This protein is involved in the repair of mismatches in DNA. It is possible that it carries out the mismatch recognition step. This protein has a weak ATPase activity. This Zymomonas mobilis subsp. mobilis (strain ATCC 31821 / ZM4 / CP4) protein is DNA mismatch repair protein MutS.